Reading from the N-terminus, the 137-residue chain is MLQPKRTKFRKQFKGRIRGEAKGGSDLNFGTYGLKALQPERITARQIEAARRAMTRHMKRQGRVWIRIFPDLPVTSKPVEVRMGKGKGSVDFWACKVKPGRIMFEIDGVSEPVAREALRLAAMKLPIKTRTVVREDW.

This sequence belongs to the universal ribosomal protein uL16 family. Part of the 50S ribosomal subunit.

Functionally, binds 23S rRNA and is also seen to make contacts with the A and possibly P site tRNAs. The chain is Large ribosomal subunit protein uL16 from Dinoroseobacter shibae (strain DSM 16493 / NCIMB 14021 / DFL 12).